Reading from the N-terminus, the 455-residue chain is Inactive peptidyl-prolyl cis-trans isomerase shutdown (455 aa).

The disordered stretch occupies residues 34–54 (SQQNHARDLGLDSDSDSDYED). Over residues 44–54 (LDSDSDSDYED) the composition is skewed to acidic residues. Residues 103 to 192 (KARVSVRYSG…LFKVEVIDYS (90 aa)) enclose the PPIase FKBP-type domain. 2 TPR repeats span residues 218–251 (AVDLHLHGKDSVKLGRYQSAATAFERAVSSLNYC) and 303–336 (CKALFQEGRALAALGEYNLARNAYLQAQAKQPAN).

The protein belongs to the FKBP6 family. In terms of assembly, interacts with Hsp83. As to expression, strongly expressed in the germline stem cells and in 16-cell cysts. Present in the germ cells throughout embryogenesis. Defects are due to derepression of transposable elements and impaired piRNA biogenesis.

The protein localises to the cytoplasm. The protein resides in the cytoplasmic ribonucleoprotein granule. In terms of biological role, co-chaperone required during oogenesis to repress transposable elements and prevent their mobilization, which is essential for the germline integrity. Acts via the piRNA metabolic process, which mediates the repression of transposable elements during meiosis by forming complexes composed of piRNAs and Piwi proteins and govern the methylation and subsequent repression of transposons. Acts as a co-chaperone via its interaction with Hsp83/HSP90 and is required for the biogenesis of all three piRNA major populations. The chain is Inactive peptidyl-prolyl cis-trans isomerase shutdown from Drosophila melanogaster (Fruit fly).